A 139-amino-acid polypeptide reads, in one-letter code: D-ribose pyranase (139 aa).

Histidine 20 functions as the Proton donor in the catalytic mechanism. Residues aspartate 28, histidine 106, and 128–130 (YAN) each bind substrate.

This sequence belongs to the RbsD / FucU family. RbsD subfamily. Homodecamer.

The protein resides in the cytoplasm. The catalysed reaction is beta-D-ribopyranose = beta-D-ribofuranose. The protein operates within carbohydrate metabolism; D-ribose degradation; D-ribose 5-phosphate from beta-D-ribopyranose: step 1/2. Its function is as follows. Catalyzes the interconversion of beta-pyran and beta-furan forms of D-ribose. In Aeromonas salmonicida (strain A449), this protein is D-ribose pyranase.